The primary structure comprises 562 residues: MSDQSVPSFRWTQSLRRGLSAWTTSVKADVLNDTRALLSGLDFAKVASVQRMMRRVKRDDSDLVGLRDLNKEVDSLMIMKSNQKNMFLKVGSLSKDELMELSSDLEKLKQKVQRTERVGNGTGQYQGNLSNTQLTRRSEILQLVGIQRAGLAPTGGVVKIWDIKDPSLLVNQFGSVPAVTISCMTEQGGESLNDVVQGLTDLGLLYTAKYPNLNDLKALTTKHPSLNIITQEESQINISGYNLSLSAAVKAGACLIDGGNMLETIKIEESTFTTVIKTLLEVKNKEKMFVSPTPGQRNPYENVLYKLCLSGDGWPYIASRSQIKGRAWDNTVVEFDTATVKEPIPIRNGGAPLLTTLKPEIENQVKRSVESLLINDTTWIDIEGPPNDPVEFAIYQPESQRYIHCYRRPNDIKSFKDQSKYCHGILLKDVENARPGLISSIIRSLPKSMVFTAQGADDIRKLFDMHGRQDLKIVDVKLSAEESRIFEDLVWKRFEHLCDKHKGIVIKSKKKGSTPATTNAHCALLDGVMFSAVISGSVSNEKPKRMLPIDLLFREPETTVVL.

Positions 53–238 are binding site for the cap structure m7GTP; the sequence is MRRVKRDDSD…ITQEESQINI (186 aa). Residues D381 and E383 each coordinate Mn(2+). Positions 391, 498, 501, and 522 each coordinate Zn(2+). D526 lines the Mn(2+) pocket.

This sequence belongs to the arenaviridae nucleocapsid protein family. As to quaternary structure, homomultimerizes to form the nucleocapsid. Binds to viral genomic RNA. Interacts with glycoprotein G2. Interacts with protein Z; this interaction probably directs the encapsidated genome to budding sites. Interacts with protein L; this interaction does not interfere with Z-L interaction. Interacts with host IKBKE (via Protein kinase domain); the interaction inhibits IKBKE kinase activity.

It is found in the virion. Its subcellular location is the host cytoplasm. Its function is as follows. Encapsidates the genome, protecting it from nucleases. The encapsidated genomic RNA is termed the nucleocapsid (NC). Serves as template for viral transcription and replication. The increased presence of protein N in host cell does not seem to trigger the switch from transcription to replication as observed in other negative strain RNA viruses. Through the interaction with host IKBKE, strongly inhibits the phosphorylation and nuclear translocation of host IRF3, a protein involved in interferon activation pathway, leading to the inhibition of interferon-beta and IRF3-dependent promoters activation. Also encodes a functional 3'-5' exoribonuclease that degrades preferentially dsRNA substrates and thereby participates in the suppression of interferon induction. The chain is Nucleoprotein from Neotoma (wood rats).